Reading from the N-terminus, the 390-residue chain is S-adenosylmethionine synthase 2 (390 aa).

Residue glutamate 9 participates in Mg(2+) binding. ATP is bound at residue histidine 15. Glutamate 43 is a binding site for K(+). 2 residues coordinate L-methionine: glutamate 56 and glutamine 99. Residues 167-169 (DGK), 235-238 (SGRF), aspartate 246, 252-253 (RK), alanine 269, lysine 273, and lysine 277 each bind ATP. An L-methionine-binding site is contributed by aspartate 246. Lysine 277 is an L-methionine binding site.

The protein belongs to the AdoMet synthase family. In terms of assembly, homotetramer. Mn(2+) is required as a cofactor. It depends on Mg(2+) as a cofactor. Requires Co(2+) as cofactor. K(+) serves as cofactor.

The protein resides in the cytoplasm. It catalyses the reaction L-methionine + ATP + H2O = S-adenosyl-L-methionine + phosphate + diphosphate. It functions in the pathway amino-acid biosynthesis; S-adenosyl-L-methionine biosynthesis; S-adenosyl-L-methionine from L-methionine: step 1/1. Functionally, catalyzes the formation of S-adenosylmethionine from methionine and ATP. The reaction comprises two steps that are both catalyzed by the same enzyme: formation of S-adenosylmethionine (AdoMet) and triphosphate, and subsequent hydrolysis of the triphosphate. This chain is S-adenosylmethionine synthase 2 (SAMS2), found in Nicotiana tabacum (Common tobacco).